We begin with the raw amino-acid sequence, 208 residues long: NAD(P)H-quinone oxidoreductase subunit I (208 aa).

4Fe-4S ferredoxin-type domains lie at 55-84 and 95-124; these read GRIH…VDWV and RNYS…MTEE. Residues cysteine 64, cysteine 67, cysteine 70, cysteine 74, cysteine 104, cysteine 107, cysteine 110, and cysteine 114 each contribute to the [4Fe-4S] cluster site.

Belongs to the complex I 23 kDa subunit family. NDH-1 is composed of at least 11 different subunits. Requires [4Fe-4S] cluster as cofactor.

The protein localises to the cellular thylakoid membrane. It catalyses the reaction a plastoquinone + NADH + (n+1) H(+)(in) = a plastoquinol + NAD(+) + n H(+)(out). It carries out the reaction a plastoquinone + NADPH + (n+1) H(+)(in) = a plastoquinol + NADP(+) + n H(+)(out). In terms of biological role, NDH-1 shuttles electrons from an unknown electron donor, via FMN and iron-sulfur (Fe-S) centers, to quinones in the respiratory and/or the photosynthetic chain. The immediate electron acceptor for the enzyme in this species is believed to be plastoquinone. Couples the redox reaction to proton translocation, and thus conserves the redox energy in a proton gradient. The polypeptide is NAD(P)H-quinone oxidoreductase subunit I (Prochlorococcus marinus (strain AS9601)).